The primary structure comprises 132 residues: Small ribosomal subunit protein uS8 (132 aa).

Belongs to the universal ribosomal protein uS8 family. As to quaternary structure, part of the 30S ribosomal subunit. Contacts proteins S5 and S12.

Functionally, one of the primary rRNA binding proteins, it binds directly to 16S rRNA central domain where it helps coordinate assembly of the platform of the 30S subunit. In Staphylococcus saprophyticus subsp. saprophyticus (strain ATCC 15305 / DSM 20229 / NCIMB 8711 / NCTC 7292 / S-41), this protein is Small ribosomal subunit protein uS8.